Here is a 198-residue protein sequence, read N- to C-terminus: Dephospho-CoA kinase (198 aa).

Residues 4–198 (IIGITGGIAS…DSQLRRLQNE (195 aa)) enclose the DPCK domain. 12–17 (ASGKST) contacts ATP.

The protein belongs to the CoaE family.

It is found in the cytoplasm. It catalyses the reaction 3'-dephospho-CoA + ATP = ADP + CoA + H(+). It functions in the pathway cofactor biosynthesis; coenzyme A biosynthesis; CoA from (R)-pantothenate: step 5/5. Its function is as follows. Catalyzes the phosphorylation of the 3'-hydroxyl group of dephosphocoenzyme A to form coenzyme A. In Streptococcus mutans serotype c (strain ATCC 700610 / UA159), this protein is Dephospho-CoA kinase.